A 544-amino-acid chain; its full sequence is Chaperonin GroEL 4 (544 aa).

ATP-binding positions include threonine 30–proline 33, lysine 51, aspartate 87–threonine 91, glycine 415, and aspartate 496.

It belongs to the chaperonin (HSP60) family. Forms a cylinder of 14 subunits composed of two heptameric rings stacked back-to-back. Interacts with the co-chaperonin GroES.

Its subcellular location is the cytoplasm. The catalysed reaction is ATP + H2O + a folded polypeptide = ADP + phosphate + an unfolded polypeptide.. Functionally, together with its co-chaperonin GroES, plays an essential role in assisting protein folding. The GroEL-GroES system forms a nano-cage that allows encapsulation of the non-native substrate proteins and provides a physical environment optimized to promote and accelerate protein folding. This is Chaperonin GroEL 4 from Sinorhizobium medicae (strain WSM419) (Ensifer medicae).